The chain runs to 492 residues: Catalase isozyme B (492 aa).

Residues 1–20 (MDPYKHRPSSGSNSTFWTTN) form a disordered region. A compositionally biased stretch (polar residues) spans 9-20 (SSGSNSTFWTTN). Position 62 (Arg-62) interacts with heme. Residue His-65 is part of the active site. Arg-102 contacts heme. The active site involves Asn-138. Phe-151 provides a ligand contact to heme. Tyr-210 is subject to Phosphotyrosine. The segment at residues 325–348 (CPAIIVPGIHYSDDKLLQTRIFSY) is a cross-link (3-(S-cysteinyl)-tyrosine (Cys-Tyr)). Residues Arg-344, Tyr-348, and Arg-355 each contribute to the heme site. Positions 484-492 (SRLNLKPNM) match the Peroxisome targeting signal motif.

Belongs to the catalase family. Homotetramer. Interacts with GLO1 and GLO4; these interactions are disturbed by alpha-hydroxy-2-pyridinemethanesulfonic acid (HPMS) and salicylic acid (SA). Interacts with STRK1 at the plasma membrane. It depends on heme as a cofactor. Predominantly expressed in roots and, at low levels, in leaves (e.g. sheaths). Detected in seeds. Also present in panicles and culms. Observed in stems and anthers.

It is found in the peroxisome. Its subcellular location is the glyoxysome. The protein localises to the cell membrane. The enzyme catalyses 2 H2O2 = O2 + 2 H2O. Its activity is regulated as follows. Strongly inhibited by beta-mercaptoethanol, sodium azide and potassium cyanide. Slightly repressed by 3-amino-1,2,4-triazole (3-AT). Activity is repressed proportionally to increased concentration of NaCl, KCl, LiCl and MgCl(2). In terms of biological role, occurs in almost all aerobically respiring organisms and serves to protect cells from the toxic effects of hydrogen peroxide. May prevent the excessive accumulation of H(2)O(2) during water stress in response to the accumulation of abscisic acid (ABA). Involved in the modulation of ROS levels related to root growth regulation. Required for pollen viability and floret fertility upon heat stress (HS) by detoxifying reactive oxygen species (ROS) and malondialdehyde (MDA) accumulation in developing anthers exposed to HS. This is Catalase isozyme B (CATB) from Oryza sativa subsp. japonica (Rice).